A 447-amino-acid chain; its full sequence is Alpha-1,3-mannosyl-glycoprotein 2-beta-N-acetylglucosaminyltransferase (447 aa).

Topologically, residues 1 to 6 (MLKKQT) are cytoplasmic. A helical; Signal-anchor for type II membrane protein membrane pass occupies residues 7 to 29 (AGLVLWGAIIFVGWNALLLLFFW). The Lumenal portion of the chain corresponds to 30 to 447 (TRPAPGRLPS…TWTGYDPSWN (418 aa)). An intrachain disulfide couples C115 to C145. Substrate is bound by residues R117, D144, H190, and D212. Mn(2+) is bound at residue D213. A disulfide bridge links C239 with C305. The Proton acceptor role is filled by D291. S322 serves as a coordination point for substrate.

The protein belongs to the glycosyltransferase 13 family. In terms of assembly, interacts with MGAT4D. Interacts with BRI3. It depends on Mn(2+) as a cofactor. Detected in kidney, liver and brain.

Its subcellular location is the golgi apparatus membrane. It is found in the cytoplasm. The protein resides in the perinuclear region. The catalysed reaction is N(4)-(alpha-D-Man-(1-&gt;3)-[alpha-D-Man-(1-&gt;3)-[alpha-D-Man-(1-&gt;6)]-alpha-D-Man-(1-&gt;6)]-beta-D-Man-(1-&gt;4)-beta-D-GlcNAc-(1-&gt;4)-beta-D-GlcNAc)-L-asparaginyl-[protein] (N-glucan mannose isomer 5A1,2) + UDP-N-acetyl-alpha-D-glucosamine = N(4)-{beta-D-GlcNAc-(1-&gt;2)-alpha-D-Man-(1-&gt;3)-[alpha-D-Man-(1-&gt;3)-[alpha-D-Man-(1-&gt;6)]-alpha-D-Man-(1-&gt;6)]-beta-D-Man-(1-&gt;4)-beta-D-GlcNAc-(1-&gt;4)-beta-D-GlcNAc}-L-asparaginyl-[protein] + UDP + H(+). Its pathway is protein modification; protein glycosylation. Functionally, initiates complex N-linked carbohydrate formation. Essential for the conversion of high-mannose to hybrid and complex N-glycans. The protein is Alpha-1,3-mannosyl-glycoprotein 2-beta-N-acetylglucosaminyltransferase (Mgat1) of Mus musculus (Mouse).